Consider the following 207-residue polypeptide: Probable GTP-binding protein EngB (207 aa).

Residues 25–202 (DVPEIAFVGR…ATLLWQWAHP (178 aa)) enclose the EngB-type G domain. GTP contacts are provided by residues 33-40 (GRSNAGKS), 60-64 (GRTQH), 82-85 (DLPG), 152-155 (TKAD), and 181-183 (FSA). Mg(2+) contacts are provided by Ser-40 and Thr-62.

It belongs to the TRAFAC class TrmE-Era-EngA-EngB-Septin-like GTPase superfamily. EngB GTPase family. Mg(2+) is required as a cofactor.

Functionally, necessary for normal cell division and for the maintenance of normal septation. The protein is Probable GTP-binding protein EngB of Albidiferax ferrireducens (strain ATCC BAA-621 / DSM 15236 / T118) (Rhodoferax ferrireducens).